A 349-amino-acid polypeptide reads, in one-letter code: Protein-glutamate methylesterase/protein-glutamine glutaminase (349 aa).

A Response regulatory domain is found at 5-122 (KVLVVDDSAF…SLDLYKVKDE (118 aa)). Asp56 carries the 4-aspartylphosphate modification. A CheB-type methylesterase domain is found at 156 to 349 (ARPQQAIVAI…AAAIVQLIGE (194 aa)). Catalysis depends on residues Ser168, His195, and Asp291.

This sequence belongs to the CheB family. Post-translationally, phosphorylated by CheA. Phosphorylation of the N-terminal regulatory domain activates the methylesterase activity.

It is found in the cytoplasm. It catalyses the reaction [protein]-L-glutamate 5-O-methyl ester + H2O = L-glutamyl-[protein] + methanol + H(+). The enzyme catalyses L-glutaminyl-[protein] + H2O = L-glutamyl-[protein] + NH4(+). Functionally, involved in chemotaxis. Part of a chemotaxis signal transduction system that modulates chemotaxis in response to various stimuli. Catalyzes the demethylation of specific methylglutamate residues introduced into the chemoreceptors (methyl-accepting chemotaxis proteins or MCP) by CheR. Also mediates the irreversible deamidation of specific glutamine residues to glutamic acid. This is Protein-glutamate methylesterase/protein-glutamine glutaminase from Geobacillus kaustophilus (strain HTA426).